The sequence spans 246 residues: Small ribosomal subunit protein uS2 (246 aa).

Residues 224-246 (AKQGEESAETEAKEAETTETTTA) form a disordered region. Over residues 225 to 239 (KQGEESAETEAKEAE) the composition is skewed to basic and acidic residues.

This sequence belongs to the universal ribosomal protein uS2 family.

This chain is Small ribosomal subunit protein uS2, found in Bacillus licheniformis (strain ATCC 14580 / DSM 13 / JCM 2505 / CCUG 7422 / NBRC 12200 / NCIMB 9375 / NCTC 10341 / NRRL NRS-1264 / Gibson 46).